We begin with the raw amino-acid sequence, 129 residues long: Small ribosomal subunit protein uS11 (129 aa).

Part of the 30S ribosomal subunit. Interacts with proteins S7 and S18. Binds to IF-3. May be methylated on an undetermined residue.

Functionally, located on the platform of the 30S subunit, it bridges several disparate RNA helices of the 16S rRNA. Forms part of the Shine-Dalgarno cleft in the 70S ribosome. This Rhodopseudomonas palustris (strain ATCC BAA-98 / CGA009) protein is Small ribosomal subunit protein uS11.